We begin with the raw amino-acid sequence, 200 residues long: Endochitinase (200 aa).

E58 functions as the Proton donor in the catalytic mechanism.

Belongs to the glycosyl hydrolase 19 family. Chitinase class I subfamily.

It catalyses the reaction Random endo-hydrolysis of N-acetyl-beta-D-glucosaminide (1-&gt;4)-beta-linkages in chitin and chitodextrins.. Functionally, this protein functions as a defense against chitin-containing fungal pathogens. This Avena sativa (Oat) protein is Endochitinase.